The primary structure comprises 827 residues: Periplasmic nitrate reductase (827 aa).

The segment at residues Met-1–Ala-32 is a signal peptide (tat-type signal). A 4Fe-4S Mo/W bis-MGD-type domain is found at Ile-37–Asp-93. Positions 44, 47, 51, and 79 each coordinate [4Fe-4S] cluster. Mo-bis(molybdopterin guanine dinucleotide) is bound by residues Lys-81, Gln-148, Asn-173, Cys-177, Trp-210–Met-217, Ser-241–His-245, Met-371, Gln-375, Asn-481, Ser-507–Asp-508, Lys-530, Asp-557, and Thr-717–Ser-726. Phe-793 serves as a coordination point for substrate. 2 residues coordinate Mo-bis(molybdopterin guanine dinucleotide): Asn-801 and Lys-818.

It belongs to the prokaryotic molybdopterin-containing oxidoreductase family. NasA/NapA/NarB subfamily. Component of the periplasmic nitrate reductase NapAB complex composed of NapA and NapB. It depends on [4Fe-4S] cluster as a cofactor. The cofactor is Mo-bis(molybdopterin guanine dinucleotide). Predicted to be exported by the Tat system. The position of the signal peptide cleavage has not been experimentally proven.

Its subcellular location is the periplasm. The catalysed reaction is 2 Fe(II)-[cytochrome] + nitrate + 2 H(+) = 2 Fe(III)-[cytochrome] + nitrite + H2O. In terms of biological role, catalytic subunit of the periplasmic nitrate reductase complex NapAB. Receives electrons from NapB and catalyzes the reduction of nitrate to nitrite. The sequence is that of Periplasmic nitrate reductase from Glaesserella parasuis serovar 5 (strain SH0165) (Haemophilus parasuis).